The primary structure comprises 148 residues: METGALRRPQLLPLLLLLCGGCPRAGGCNETGMLERLPLCGKAFADMMGKVDVWKWCNLSEFIVYYESFTNCTEMEANVVGCYWPNPLAQGFITGIHRQFFSNCTVDRVHLEDPPDEVLIPLIVIPVVLTVAMAGLVVWRSKRTDTLL.

The first 23 residues, 1–23 (METGALRRPQLLPLLLLLCGGCP), serve as a signal peptide directing secretion. Topologically, residues 24–113 (RAGGCNETGM…CTVDRVHLED (90 aa)) are extracellular. N-linked (GlcNAc...) asparagine glycosylation is found at Asn-29, Asn-58, Asn-71, and Asn-103. Cystine bridges form between Cys-40-Cys-72 and Cys-57-Cys-104. The helical transmembrane segment at 114-138 (PPDEVLIPLIVIPVVLTVAMAGLVV) threads the bilayer. Over 139 to 148 (WRSKRTDTLL) the chain is Cytoplasmic.

The protein belongs to the RAMP family. In terms of assembly, heterodimer of CALCRL and RAMP3; interaction induces allosteric modulation of CALCRL function and ligand specificity for adrenomedullin/ADM and intermedin/ADM2. Heterodimer of CALCR and RAMP3; interaction form the receptor complex AMYR3 for amylin/IAPP. Interacts with GPER1. As to expression, strongly expressed in lung, breast, immune system and fetal tissues.

The protein localises to the cell membrane. The protein resides in the membrane. Accessory protein that interacts with and modulates the function of G-protein coupled receptors including calcitonin gene-related peptide type 1 receptor (CALCRL), calcitonin receptor (CALCR) and G-protein coupled estrogen receptor 1 (GPER1). Required for the transport of CALCRL and GPER1 receptors to the plasma membrane. Plays a role in cardioprotection by reducing cardiac hypertrophy and perivascular fibrosis in a GPER1-dependent manner. Together with CALCRL, form a receptor complex for adrenomedullin/ADM and intermedin/ADM2. Together with CALCR, act as a receptor complex for amylin/IAPP. The chain is Receptor activity-modifying protein 3 from Homo sapiens (Human).